The primary structure comprises 1690 residues: Lysine-specific demethylase 5A (1690 aa).

The JmjN domain maps to 19 to 60 (CPVFEPSWEEFTDPLSFIGRIRPLAEKTGICKIRPPKDWQPP). Positions 84–174 (TRVRLDFLDQ…ILYPYELFQS (91 aa)) constitute an ARID domain. A Glycyl lysine isopeptide (Lys-Gly) (interchain with G-Cter in SUMO2) cross-link involves residue lysine 191. Serine 204 carries the post-translational modification Phosphoserine. The segment at 293-343 (LYVCMFCGRGNNEDKLLLCDGCDDSYHTFCLIPPLPDVPKGDWRCPKCVAE) adopts a PHD-type 1 zinc-finger fold. Tyrosine 409 lines the 2-oxoglutarate pocket. The GSGFP motif motif lies at 419–423 (GSGFP). The JmjC domain maps to 437 to 603 (EYALSGWNLN…IGRQCVNHYR (167 aa)). Residues histidine 483 and glutamate 485 each contribute to the Fe cation site. 2-oxoglutarate is bound by residues serine 491, asparagine 493, and lysine 501. Position 571 (histidine 571) interacts with Fe cation. Residues 676-728 (CSACRTTCFLSALTCSCNPERLVCLYHPTDLCPCPMQKKCLRYRYPLEDLPSL) form a C5HC2 zinc finger. A Glycyl lysine isopeptide (Lys-Gly) (interchain with G-Cter in SUMO2) cross-link involves residue lysine 1007. Position 1111 is a phosphoserine (serine 1111). The segment at 1161–1218 (VKFCICRKTASGFMLQCELCKDWFHNSCVPLPKSSSQKKGSSWQAKEVKFLCPLCMRS) adopts a PHD-type 2 zinc-finger fold. Disordered stretches follow at residues 1327–1348 (SVSS…SDED) and 1407–1433 (KSCS…LEPP). Phosphoserine occurs at positions 1330 and 1331. Over residues 1337-1348 (DYDDEETDSDED) the composition is skewed to acidic residues. Threonine 1343 carries the post-translational modification Phosphothreonine. Serine 1345 carries the post-translational modification Phosphoserine. A phosphoserine mark is found at serine 1438 and serine 1488. Composition is skewed to basic and acidic residues over residues 1490–1503 (EEKP…DSSE) and 1520–1530 (GKQKSKELKKM). Disordered regions lie at residues 1490 to 1509 (EEKP…RKRK) and 1516 to 1543 (LFGE…LGAD). Position 1595 is a phosphotyrosine (tyrosine 1595). Serine 1598 and serine 1603 each carry phosphoserine. Residues 1607–1661 (NAVCAAQNCQRPCKDKVDWVQCDGGCDEWFHQVCVGVSPEMAENEDYICINCAKK) form a PHD-type 3 zinc finger. The tract at residues 1623–1690 (VDWVQCDGGC…LPMEDLKETS (68 aa)) is interaction with LMO2. Serine 1666 bears the Phosphoserine mark.

The protein belongs to the JARID1 histone demethylase family. Interacts with SUZ12; the interaction is direct. Interacts with the viral protein-binding domain of RB1. Interacts with ESR1, MYC, MYCN and LMO2. Interacts with HDAC1; this interaction impairs histone deacetylation by HDAC1. Interacts with BMAL1 and CLOCK. Interacts (via PHD-type 1 zinc finger) with histone H3 unmodified at 'Lys-4' and (via PHD-type 3 zinc finger) with histone H3 di- and trimethylated at 'Lys-4'. The cofactor is Fe(2+).

It localises to the nucleus. It is found in the nucleolus. It carries out the reaction N(6),N(6),N(6)-trimethyl-L-lysyl(4)-[histone H3] + 3 2-oxoglutarate + 3 O2 = L-lysyl(4)-[histone H3] + 3 formaldehyde + 3 succinate + 3 CO2. Its activity is regulated as follows. The inhibitors KDOAM-25, CPI-455 and others inhibits its demethylase activity, resulting to cell growth arrest in cancer cells. Its function is as follows. Histone demethylase that specifically demethylates 'Lys-4' of histone H3, thereby playing a central role in histone code. Does not demethylate histone H3 'Lys-9', H3 'Lys-27', H3 'Lys-36', H3 'Lys-79' or H4 'Lys-20'. Demethylates trimethylated and dimethylated but not monomethylated H3 'Lys-4'. Regulates specific gene transcription through DNA-binding on 5'-CCGCCC-3' motif. May stimulate transcription mediated by nuclear receptors. Involved in transcriptional regulation of Hox proteins during cell differentiation. May participate in transcriptional repression of cytokines such as CXCL12. Plays a role in the regulation of the circadian rhythm and in maintaining the normal periodicity of the circadian clock. In a histone demethylase-independent manner, acts as a coactivator of the CLOCK-BMAL1-mediated transcriptional activation of PER1/2 and other clock-controlled genes and increases histone acetylation at PER1/2 promoters by inhibiting the activity of HDAC1. Seems to act as a transcriptional corepressor for some genes such as MT1F and to favor the proliferation of cancer cells. The chain is Lysine-specific demethylase 5A from Homo sapiens (Human).